The primary structure comprises 521 residues: Protein nucleotidyltransferase YdiU (521 aa).

8 residues coordinate ATP: Gly-109, Gly-111, Arg-112, Lys-131, Asp-143, Gly-144, Arg-194, and Arg-201. Asp-270 (proton acceptor) is an active-site residue. Mg(2+) is bound by residues Asn-271 and Asp-280. Asp-280 contacts ATP.

The protein belongs to the SELO family. It depends on Mg(2+) as a cofactor. The cofactor is Mn(2+).

The catalysed reaction is L-seryl-[protein] + ATP = 3-O-(5'-adenylyl)-L-seryl-[protein] + diphosphate. It catalyses the reaction L-threonyl-[protein] + ATP = 3-O-(5'-adenylyl)-L-threonyl-[protein] + diphosphate. It carries out the reaction L-tyrosyl-[protein] + ATP = O-(5'-adenylyl)-L-tyrosyl-[protein] + diphosphate. The enzyme catalyses L-histidyl-[protein] + UTP = N(tele)-(5'-uridylyl)-L-histidyl-[protein] + diphosphate. The catalysed reaction is L-seryl-[protein] + UTP = O-(5'-uridylyl)-L-seryl-[protein] + diphosphate. It catalyses the reaction L-tyrosyl-[protein] + UTP = O-(5'-uridylyl)-L-tyrosyl-[protein] + diphosphate. In terms of biological role, nucleotidyltransferase involved in the post-translational modification of proteins. It can catalyze the addition of adenosine monophosphate (AMP) or uridine monophosphate (UMP) to a protein, resulting in modifications known as AMPylation and UMPylation. In Burkholderia pseudomallei (strain K96243), this protein is Protein nucleotidyltransferase YdiU.